Here is a 158-residue protein sequence, read N- to C-terminus: uncharacterized protein (158 aa).

This is an uncharacterized protein from Acidianus convivator (ABV).